The chain runs to 522 residues: Cytochrome P450 4F4 (522 aa).

2 helical membrane-spanning segments follow: residues 15–35 (TSLP…VRVL) and 87–107 (GFMT…PDVI). Heme-binding residues include Glu328 and Cys468.

The protein belongs to the cytochrome P450 family. It depends on heme as a cofactor. As to expression, expressed in hepatocytes. High expression in liver and kidney. Lower expression in brain.

The protein resides in the endoplasmic reticulum membrane. It is found in the microsome membrane. It catalyses the reaction (5Z,8Z,11Z,14Z)-eicosatetraenoate + reduced [NADPH--hemoprotein reductase] + O2 = 20-hydroxy-(5Z,8Z,11Z,14Z)-eicosatetraenoate + oxidized [NADPH--hemoprotein reductase] + H2O + H(+). It carries out the reaction leukotriene B4 + reduced [NADPH--hemoprotein reductase] + O2 = 20-hydroxy-leukotriene B4 + oxidized [NADPH--hemoprotein reductase] + H2O + H(+). The catalysed reaction is 6-trans-leukotriene B4 + reduced [NADPH--hemoprotein reductase] + O2 = 20-hydroxy-6-trans-leukotriene B4 + oxidized [NADPH--hemoprotein reductase] + H2O + H(+). The enzyme catalyses prostaglandin A1 + reduced [NADPH--hemoprotein reductase] + O2 = 20-hydroxy prostaglandin A1 + oxidized [NADPH--hemoprotein reductase] + H2O + H(+). It catalyses the reaction prostaglandin E1 + reduced [NADPH--hemoprotein reductase] + O2 = 20-hydroxy prostaglandin E1 + oxidized [NADPH--hemoprotein reductase] + H2O + H(+). Functionally, a cytochrome P450 monooxygenase involved in the metabolism of arachidonic acid and its oxygenated derivatives. Mechanistically, uses molecular oxygen inserting one oxygen atom into a substrate, and reducing the second into a water molecule, with two electrons provided by NADPH via cytochrome P450 reductase (CPR; NADPH-ferrihemoprotein reductase). Participates in the conversion of arachidonic acid to omega-hydroxyeicosatetraenoic acid (20-HETE), a signaling molecule acting both as vasoconstrictive and natriuretic with overall effect on arterial blood pressure. Hydroxylates the terminal carbon (omega-hydroxylation) of inflammatory lipid mediators, including prostaglandin (PG) A1, PGE1 and leukotriene B4 (LTB4), and may play a role in inactivation of these oxylipins during the resolution of inflammation. This is Cytochrome P450 4F4 from Rattus norvegicus (Rat).